The chain runs to 177 residues: GTP-dependent dephospho-CoA kinase (177 aa).

Residues Asp-45, Val-46, Val-47, Asp-64, and Glu-120 each coordinate GTP.

Belongs to the GTP-dependent DPCK family.

The catalysed reaction is 3'-dephospho-CoA + GTP = GDP + CoA + H(+). It functions in the pathway cofactor biosynthesis; coenzyme A biosynthesis. Catalyzes the GTP-dependent phosphorylation of the 3'-hydroxyl group of dephosphocoenzyme A to form coenzyme A (CoA). In Halobacterium salinarum (strain ATCC 29341 / DSM 671 / R1), this protein is GTP-dependent dephospho-CoA kinase.